The chain runs to 378 residues: MFYVSKVTPFFFALALLNLLISLFIRLSQDTSLFFVSLVFGFVGLTLMGAMYQIIPNSQNRKLSIPKVSYLVFFLILVSFYEFYTGNTESGSLFLFLGSLIFFFHLLLNVKNFYPLTVRFLLASMIYLVLSALFLYLHFKGFLPVQLSVHTLTVGSMLNAIYGVELAWIPMLIMETLNIRKGEKLFTAKQVSTLALLLAFWSMNYKLIALAGLLEFGVALYFLYLNYELFKRKRMPTPPPNVVKIFLFALLFLPLGMLLGIFSASHAQALPFSLRLHLDLILYGFGAFTIFGGMLHLLPRIVWNWKVQEKENPGFTMGDLVNERELQTFLEYSALLYALFLAVDSLFSPLHVISTVVYLVIMALFLKEIHKAFLYIFK.

The next 10 helical transmembrane spans lie at 7–29 (VTPFFFALALLNLLISLFIRLSQ), 33–55 (LFFVSLVFGFVGLTLMGAMYQII), 68–85 (VSYLVFFLILVSFYEFYT), 90–108 (SGSLFLFLGSLIFFFHLLL), 115–137 (PLTVRFLLASMIYLVLSALFLYL), 152–174 (LTVGSMLNAIYGVELAWIPMLIM), 204–225 (NYKLIALAGLLEFGVALYFLYL), 245–267 (IFLFALLFLPLGMLLGIFSASHA), 280–302 (LILYGFGAFTIFGGMLHLLPRIV), and 347–366 (FSPLHVISTVVYLVIMALFL).

Its subcellular location is the cell membrane. This is an uncharacterized protein from Aquifex aeolicus (strain VF5).